A 122-amino-acid chain; its full sequence is Large ribosomal subunit protein uL18 (122 aa).

The span at 1-11 (MLKKPDRNALR) shows a compositional bias: basic and acidic residues. The disordered stretch occupies residues 1 to 22 (MLKKPDRNALRDKRRRRVRKKI). The span at 12 to 22 (DKRRRRVRKKI) shows a compositional bias: basic residues.

This sequence belongs to the universal ribosomal protein uL18 family. In terms of assembly, part of the 50S ribosomal subunit; part of the 5S rRNA/L5/L18/L25 subcomplex. Contacts the 5S and 23S rRNAs.

This is one of the proteins that bind and probably mediate the attachment of the 5S RNA into the large ribosomal subunit, where it forms part of the central protuberance. This Pelotomaculum thermopropionicum (strain DSM 13744 / JCM 10971 / SI) protein is Large ribosomal subunit protein uL18.